The primary structure comprises 466 residues: Endoglucanase E-5 (466 aa).

The first 36 residues, 1–36 (MAKSPAARKGXPPVAVAVTAALALLIALLSPGVAQA), serve as a signal peptide directing secretion. The 103-residue stretch at 37 to 139 (AGLTATVTKE…TINGAPCDEG (103 aa)) folds into the CBM2 domain. The segment at 129-166 (CTINGAPCDEGSEPGGPGGPGTPSPDPGTQPGTGTPVE) is disordered. Glutamate 299 acts as the Proton donor in catalysis. Glutamate 391 (nucleophile) is an active-site residue.

This sequence belongs to the glycosyl hydrolase 5 (cellulase A) family.

It carries out the reaction Endohydrolysis of (1-&gt;4)-beta-D-glucosidic linkages in cellulose, lichenin and cereal beta-D-glucans.. It functions in the pathway glycan metabolism; cellulose degradation. This chain is Endoglucanase E-5 (celE), found in Thermobifida fusca (Thermomonospora fusca).